Here is a 285-residue protein sequence, read N- to C-terminus: Protease HtpX homolog (285 aa).

The next 2 helical transmembrane spans lie at 7–27 (TAML…MIGG) and 30–50 (GMTI…WFSD). His-131 is a Zn(2+) binding site. Glu-132 is a catalytic residue. His-135 is a binding site for Zn(2+). A run of 2 helical transmembrane segments spans residues 146–166 (ISAT…FFGG) and 177–197 (IAGI…QMAI). Residue Glu-202 participates in Zn(2+) binding.

Belongs to the peptidase M48B family. Zn(2+) serves as cofactor.

Its subcellular location is the cell inner membrane. In Burkholderia thailandensis (strain ATCC 700388 / DSM 13276 / CCUG 48851 / CIP 106301 / E264), this protein is Protease HtpX homolog.